Consider the following 378-residue polypeptide: 1-acyl-sn-glycerol-3-phosphate acyltransferase delta (378 aa).

The chain crosses the membrane as a helical span at residues 11–31 (FLCHLVFCYVFIASGLIVNAI). An HXXXXD motif motif is present at residues 96 to 101 (HKFEID). 3 helical membrane passes run 125–145 (ELAY…IFCT), 311–331 (WLFW…SMVS), and 338–358 (LASL…MIGV).

This sequence belongs to the 1-acyl-sn-glycerol-3-phosphate acyltransferase family.

It is found in the endoplasmic reticulum membrane. It carries out the reaction a 1-acyl-sn-glycero-3-phosphate + an acyl-CoA = a 1,2-diacyl-sn-glycero-3-phosphate + CoA. The enzyme catalyses (4Z,7Z,10Z,13Z,16Z,19Z)-docosahexaenoyl-CoA + 1-hexadecanoyl-sn-glycero-3-phosphate = 1-hexadecanoyl-2-(4Z,7Z,10Z,13Z,16Z,19Z-docosahexaenoyl)-sn-glycero-3-phosphate + CoA. It catalyses the reaction 1-octadecanoyl-sn-glycero-3-phosphate + (9Z,12Z)-octadecadienoyl-CoA = 1-octadecanoyl-2-(9Z,12Z-octadecadienoyl)-sn-glycero-3-phosphate + CoA. The catalysed reaction is 1-octadecanoyl-sn-glycero-3-phosphate + (4Z,7Z,10Z,13Z,16Z,19Z)-docosahexaenoyl-CoA = 1-octadecanoyl-2-(4Z,7Z,10Z,13Z,16Z,19Z-docosahexaenoyl)-sn-glycero-3-phosphate + CoA. It carries out the reaction (4Z,7Z,10Z,13Z,16Z,19Z)-docosahexaenoyl-CoA + 1-(9Z-octadecenoyl)-sn-glycero-3-phosphate = 1-(9Z-octadecenoyl)-2-(4Z,7Z,10Z,13Z,16Z,19Z-docosahexaenoyl)-sn-glycero-3-phosphate + CoA. Its pathway is phospholipid metabolism; CDP-diacylglycerol biosynthesis; CDP-diacylglycerol from sn-glycerol 3-phosphate: step 2/3. Converts 1-acyl-sn-glycerol-3-phosphate (lysophosphatidic acid or LPA) into 1,2-diacyl-sn-glycerol-3-phosphate (phosphatidic acid or PA) by incorporating an acyl moiety at the sn-2 position of the glycerol backbone. Exhibits high acyl-CoA specificity for polyunsaturated fatty acyl-CoA, especially docosahexaenoyl-CoA (22:6-CoA, DHA-CoA). The chain is 1-acyl-sn-glycerol-3-phosphate acyltransferase delta (Agpat4) from Rattus norvegicus (Rat).